We begin with the raw amino-acid sequence, 420 residues long: Tryptophan--tRNA ligase (420 aa).

The 'HIGH' region signature appears at 72–80; that stretch reads PSGLPHFGH. A 'KMSKS' region motif is present at residues 308 to 312; that stretch reads KMSSS.

This sequence belongs to the class-I aminoacyl-tRNA synthetase family.

It is found in the cytoplasm. It catalyses the reaction tRNA(Trp) + L-tryptophan + ATP = L-tryptophyl-tRNA(Trp) + AMP + diphosphate + H(+). The polypeptide is Tryptophan--tRNA ligase (Archaeoglobus fulgidus (strain ATCC 49558 / DSM 4304 / JCM 9628 / NBRC 100126 / VC-16)).